The chain runs to 631 residues: 1-deoxy-D-xylulose-5-phosphate synthase (631 aa).

Thiamine diphosphate contacts are provided by residues His87 and 128–130 (GHS). Asp159 contacts Mg(2+). Thiamine diphosphate-binding positions include 160–161 (GA), Asn188, Phe295, and Glu377. Asn188 is a binding site for Mg(2+).

Belongs to the transketolase family. DXPS subfamily. As to quaternary structure, homodimer. Mg(2+) serves as cofactor. It depends on thiamine diphosphate as a cofactor.

The catalysed reaction is D-glyceraldehyde 3-phosphate + pyruvate + H(+) = 1-deoxy-D-xylulose 5-phosphate + CO2. Its pathway is metabolic intermediate biosynthesis; 1-deoxy-D-xylulose 5-phosphate biosynthesis; 1-deoxy-D-xylulose 5-phosphate from D-glyceraldehyde 3-phosphate and pyruvate: step 1/1. Catalyzes the acyloin condensation reaction between C atoms 2 and 3 of pyruvate and glyceraldehyde 3-phosphate to yield 1-deoxy-D-xylulose-5-phosphate (DXP). The protein is 1-deoxy-D-xylulose-5-phosphate synthase of Pseudomonas putida (strain GB-1).